The primary structure comprises 582 residues: Formate--tetrahydrofolate ligase (582 aa).

Position 65 to 72 (65 to 72 (TPLGEGKT)) interacts with ATP.

This sequence belongs to the formate--tetrahydrofolate ligase family.

The catalysed reaction is (6S)-5,6,7,8-tetrahydrofolate + formate + ATP = (6R)-10-formyltetrahydrofolate + ADP + phosphate. It functions in the pathway one-carbon metabolism; tetrahydrofolate interconversion. The protein is Formate--tetrahydrofolate ligase of Vibrio cholerae serotype O1 (strain ATCC 39315 / El Tor Inaba N16961).